The chain runs to 607 residues: Chaperone protein DnaK (607 aa).

T173 is subject to Phosphothreonine; by autocatalysis. 2 stretches are compositionally biased toward basic and acidic residues: residues 490–509 and 524–542; these read EQNAEEDKKRREESDLRNEA and GDNVSEDDKKQAEDKKEAL. Disordered stretches follow at residues 490–510, 524–555, and 574–607; these read EQNAEEDKKRREESDLRNEAD, GDNVSEDDKKQAEDKKEALKSALEGQDLEDIK, and QQAQQGDAAGSNQSDVEDAEYTEVKDDDDKKDNK. Over residues 574 to 587 the composition is skewed to polar residues; sequence QQAQQGDAAGSNQS. A compositionally biased stretch (basic and acidic residues) spans 595 to 607; that stretch reads TEVKDDDDKKDNK.

The protein belongs to the heat shock protein 70 family.

Acts as a chaperone. The polypeptide is Chaperone protein DnaK (Staphylococcus carnosus (strain TM300)).